The chain runs to 206 residues: Ribosomal RNA small subunit methyltransferase G (206 aa).

Residues Gly74, Leu79, 125-126, and Arg140 each bind S-adenosyl-L-methionine; that span reads VE.

Belongs to the methyltransferase superfamily. RNA methyltransferase RsmG family.

The protein localises to the cytoplasm. It catalyses the reaction guanosine(527) in 16S rRNA + S-adenosyl-L-methionine = N(7)-methylguanosine(527) in 16S rRNA + S-adenosyl-L-homocysteine. Functionally, specifically methylates the N7 position of guanine in position 527 of 16S rRNA. This chain is Ribosomal RNA small subunit methyltransferase G, found in Shewanella putrefaciens (strain CN-32 / ATCC BAA-453).